Reading from the N-terminus, the 148-residue chain is Nucleoside diphosphate kinase (148 aa).

Positions 9, 57, 85, 91, 102, and 112 each coordinate ATP. The residue at position 91 (Thr91) is a Phosphothreonine. His115 acts as the Pros-phosphohistidine intermediate in catalysis. Residue Ser122 is modified to Phosphoserine.

It belongs to the NDK family. Homotetramer. Mg(2+) serves as cofactor.

It localises to the cytoplasm. The enzyme catalyses a 2'-deoxyribonucleoside 5'-diphosphate + ATP = a 2'-deoxyribonucleoside 5'-triphosphate + ADP. The catalysed reaction is a ribonucleoside 5'-diphosphate + ATP = a ribonucleoside 5'-triphosphate + ADP. Its function is as follows. Major role in the synthesis of nucleoside triphosphates other than ATP. The ATP gamma phosphate is transferred to the NDP beta phosphate via a ping-pong mechanism, using a phosphorylated active-site intermediate. The polypeptide is Nucleoside diphosphate kinase (Bacillus cereus (strain ATCC 14579 / DSM 31 / CCUG 7414 / JCM 2152 / NBRC 15305 / NCIMB 9373 / NCTC 2599 / NRRL B-3711)).